A 472-amino-acid polypeptide reads, in one-letter code: Probable dipeptidase A (472 aa).

Residue Cys-10 is part of the active site.

The protein belongs to the peptidase C69 family.

It catalyses the reaction an L-aminoacyl-L-amino acid + H2O = 2 an L-alpha-amino acid. The sequence is that of Probable dipeptidase A (pepDA) from Streptococcus pyogenes serotype M18 (strain MGAS8232).